Here is a 93-residue protein sequence, read N- to C-terminus: Large ribosomal subunit protein uL23cz/uL23cy (93 aa).

Belongs to the universal ribosomal protein uL23 family. As to quaternary structure, part of the 50S ribosomal subunit.

It is found in the plastid. The protein localises to the chloroplast. Binds to 23S rRNA. The protein is Large ribosomal subunit protein uL23cz/uL23cy (rpl23-A) of Oryza nivara (Indian wild rice).